A 522-amino-acid polypeptide reads, in one-letter code: Bifunctional purine biosynthesis protein PurH (522 aa).

An MGS-like domain is found at 1 to 145; it reads MKPIARALIS…KNHAAVTVIV (145 aa).

This sequence belongs to the PurH family.

The catalysed reaction is (6R)-10-formyltetrahydrofolate + 5-amino-1-(5-phospho-beta-D-ribosyl)imidazole-4-carboxamide = 5-formamido-1-(5-phospho-D-ribosyl)imidazole-4-carboxamide + (6S)-5,6,7,8-tetrahydrofolate. The enzyme catalyses IMP + H2O = 5-formamido-1-(5-phospho-D-ribosyl)imidazole-4-carboxamide. The protein operates within purine metabolism; IMP biosynthesis via de novo pathway; 5-formamido-1-(5-phospho-D-ribosyl)imidazole-4-carboxamide from 5-amino-1-(5-phospho-D-ribosyl)imidazole-4-carboxamide (10-formyl THF route): step 1/1. It participates in purine metabolism; IMP biosynthesis via de novo pathway; IMP from 5-formamido-1-(5-phospho-D-ribosyl)imidazole-4-carboxamide: step 1/1. The polypeptide is Bifunctional purine biosynthesis protein PurH (Nitrosococcus oceani (strain ATCC 19707 / BCRC 17464 / JCM 30415 / NCIMB 11848 / C-107)).